The chain runs to 146 residues: Large ribosomal subunit protein uL15 (146 aa).

The span at 1 to 13 (MKLHELHSAEGSR) shows a compositional bias: basic and acidic residues. A disordered region spans residues 1–55 (MKLHELHSAEGSRRNRKRVGRGTSSGYGKTSGRGQKGQLARQGGHTRLGFEGGQM). The segment covering 23–35 (TSSGYGKTSGRGQ) has biased composition (gly residues).

This sequence belongs to the universal ribosomal protein uL15 family. Part of the 50S ribosomal subunit.

Binds to the 23S rRNA. The polypeptide is Large ribosomal subunit protein uL15 (Lactobacillus helveticus (strain DPC 4571)).